The chain runs to 71 residues: DNA-directed RNA polymerase subunit omega (71 aa).

The protein belongs to the RNA polymerase subunit omega family. As to quaternary structure, the RNAP catalytic core consists of 2 alpha, 1 beta/beta' and 1 omega subunit. When a sigma factor is associated with the core the holoenzyme is formed, which can initiate transcription.

It catalyses the reaction RNA(n) + a ribonucleoside 5'-triphosphate = RNA(n+1) + diphosphate. Functionally, promotes RNA polymerase assembly. Latches the N- and C-terminal regions of the beta' subunit thereby facilitating its interaction with the beta and alpha subunits. This Wolinella succinogenes (strain ATCC 29543 / DSM 1740 / CCUG 13145 / JCM 31913 / LMG 7466 / NCTC 11488 / FDC 602W) (Vibrio succinogenes) protein is DNA-directed RNA polymerase subunit omega.